A 305-amino-acid chain; its full sequence is Glutaminase (305 aa).

Substrate is bound by residues Ser61, Asn113, Glu158, Asn165, Tyr189, Tyr241, and Val259.

It belongs to the glutaminase family. In terms of assembly, homotetramer.

The enzyme catalyses L-glutamine + H2O = L-glutamate + NH4(+). This Alkaliphilus metalliredigens (strain QYMF) protein is Glutaminase.